Here is a 434-residue protein sequence, read N- to C-terminus: Zinc finger protein Pegasus (434 aa).

The interval 33-57 is disordered; it reads VSSDKEAETLQGAGTDSDQNGLDHP. C2H2-type zinc fingers lie at residues 82–104, 110–132, and 138–161; these read LKCR…IRIH, HRCH…MRSH, and YKCE…RRKH. Over residues 260 to 274 the composition is skewed to polar residues; the sequence is GQLSSLPPDTQNPAS. The segment at 260 to 357 is disordered; the sequence is GQLSSLPPDT…PSTPAPALPA (98 aa). Positions 296-313 are enriched in low complexity; sequence CASAVSTSVAQSSSPASP. A compositionally biased stretch (polar residues) spans 337 to 349; it reads RTSTPSISNSQPS. 2 consecutive C2H2-type zinc fingers follow at residues 364-386 and 392-419; these read HHCQ…MGCH and FQCN…CCQH.

Belongs to the Ikaros C2H2-type zinc-finger protein family. Probably self-associates.

It is found in the nucleus. Its function is as follows. Transcriptional repressor that binds the core 5'GNNTGTNG-3' DNA consensus sequence. The protein is Zinc finger protein Pegasus (ikzf5) of Xenopus tropicalis (Western clawed frog).